The following is a 405-amino-acid chain: Imidazolonepropionase (405 aa).

Positions 70 and 72 each coordinate Fe(3+). Zn(2+) contacts are provided by H70 and H72. 4-imidazolone-5-propanoate is bound by residues R79, Y142, and H175. Y142 serves as a coordination point for N-formimidoyl-L-glutamate. Residue H240 participates in Fe(3+) binding. H240 contacts Zn(2+). Position 243 (Q243) interacts with 4-imidazolone-5-propanoate. D315 contributes to the Fe(3+) binding site. D315 lines the Zn(2+) pocket. Positions 317 and 319 each coordinate N-formimidoyl-L-glutamate. S320 provides a ligand contact to 4-imidazolone-5-propanoate.

The protein belongs to the metallo-dependent hydrolases superfamily. HutI family. Requires Zn(2+) as cofactor. Fe(3+) serves as cofactor.

It localises to the cytoplasm. It catalyses the reaction 4-imidazolone-5-propanoate + H2O = N-formimidoyl-L-glutamate. Its pathway is amino-acid degradation; L-histidine degradation into L-glutamate; N-formimidoyl-L-glutamate from L-histidine: step 3/3. Its function is as follows. Catalyzes the hydrolytic cleavage of the carbon-nitrogen bond in imidazolone-5-propanoate to yield N-formimidoyl-L-glutamate. It is the third step in the universal histidine degradation pathway. In Ruegeria sp. (strain TM1040) (Silicibacter sp.), this protein is Imidazolonepropionase.